A 75-amino-acid polypeptide reads, in one-letter code: Small ribosomal subunit protein bS21A (75 aa).

Belongs to the bacterial ribosomal protein bS21 family.

This chain is Small ribosomal subunit protein bS21A (rpsU1), found in Agrobacterium fabrum (strain C58 / ATCC 33970) (Agrobacterium tumefaciens (strain C58)).